Consider the following 265-residue polypeptide: Oxidoreductase nsrR (265 aa).

The protein belongs to the avfA family.

The protein operates within secondary metabolite biosynthesis. Its function is as follows. Oxidoreductase; part of the gene cluster that mediates the biosynthesis of the tetrahydroxanthone dimer neosartorin, which exhibits antibacterial activity. The two different monomeric units appear to be synthesized by the same set of enzymes, among which the Baeyer-Villiger monooxygenase nsrF is the key enzyme for the divergence of the biosynthetic routes. The pathway begins with the synthesis of atrochrysone thioester by the polyketide synthase nsrB. The atrochrysone carboxyl ACP thioesterase nsrC then breaks the thioester bond and releases the atrochrysone carboxylic acid from AacuL. Atrochrysone carboxylic acid is decarboxylated by the decarboxylase nsrE, and oxidized by the anthrone oxygenase nsrD to yield emodin. Emodin is then reduced to emodin hydroquinone by the oxidoreductase nsrR. A-ring reduction by the short chain dehydrogenase nsrJ, dehydration by the scytalone dehydratase-like protein nsrI and probable spontaneous re-oxidation, results in overall deoxygenation to chrysophanol. The Baeyer-Villiger monooxygenase nsrF accepts chrysophanol as a substrate to insert one oxygen atom at two different positions to yield the precursors of both monomric units. NsrF is promiscuous/flexible in interacting with the 2 (non methylated and methylated) aromatic rings of chrysophanol, thus diverging the biosynthetic pathway at this point. After the hydrolysis of the lactones, methylesterification by the methyltransferase nsrG yields respectively moniliphenone and 2,2',6'-trihydroxy-4-methyl-6-methoxya-cyldiphenylmethanone. The next steps are the hydroxylation by the FAD-dependent monooxygenase nsrK, followed by isomerization by the monooxygenase nsrQ. The short chain dehydrogenase/reductase nsrO then catalyzes the C-5 ketoreduction to give the xanthone skeleton of blennolide C and 5-acetylblennolide A. The acetyltransferase nsrL has a strict substrate specificity and uses only blennolide A but not blennolide C to yield 5-acetylblennolide A as the single-acetylated product. In the final step of the biosynthesis, the heterodimerization of the 2 xanthones, blennolide C and 5-acetylblennolide A, is catalyzed by the cytochrome P450 monooxygenase nsrP. NsrP can utilize at least three different xanthones as its substrates to perform the dimerization reaction. The sequence is that of Oxidoreductase nsrR from Aspergillus novofumigatus (strain IBT 16806).